We begin with the raw amino-acid sequence, 349 residues long: Isopentenyl-diphosphate delta-isomerase (349 aa).

Substrate is bound at residue 9–10 (RK). Residues 65-67 (AMT), Ser95, and Asn124 each bind FMN. Residue 95–97 (STH) participates in substrate binding. Gln154 lines the substrate pocket. Glu155 contacts Mg(2+). Residues Lys186, Ser211, Thr216, 262–264 (GLR), and 283–284 (SR) contribute to the FMN site.

It belongs to the IPP isomerase type 2 family. As to quaternary structure, homooctamer. Dimer of tetramers. FMN is required as a cofactor. NADPH serves as cofactor. The cofactor is Mg(2+).

The protein resides in the cytoplasm. It catalyses the reaction isopentenyl diphosphate = dimethylallyl diphosphate. In terms of biological role, involved in the biosynthesis of isoprenoids. Catalyzes the 1,3-allylic rearrangement of the homoallylic substrate isopentenyl (IPP) to its allylic isomer, dimethylallyl diphosphate (DMAPP). This chain is Isopentenyl-diphosphate delta-isomerase, found in Staphylococcus aureus (strain JH1).